Here is a 445-residue protein sequence, read N- to C-terminus: Argininosuccinate synthase (445 aa).

ATP contacts are provided by residues 17 to 25 (AFSGGLDTS) and Ala-43. An L-citrulline-binding site is contributed by Tyr-99. ATP contacts are provided by Gly-129 and Thr-131. L-aspartate is bound by residues Thr-131, Asn-135, and Asp-136. Asn-135 contributes to the L-citrulline binding site. Asp-136 serves as a coordination point for ATP. 2 residues coordinate L-citrulline: Arg-139 and Ser-192. Asp-194 is a binding site for ATP. Positions 201, 203, and 280 each coordinate L-citrulline.

Belongs to the argininosuccinate synthase family. Type 2 subfamily. In terms of assembly, homotetramer.

The protein localises to the cytoplasm. It catalyses the reaction L-citrulline + L-aspartate + ATP = 2-(N(omega)-L-arginino)succinate + AMP + diphosphate + H(+). It functions in the pathway amino-acid biosynthesis; L-arginine biosynthesis; L-arginine from L-ornithine and carbamoyl phosphate: step 2/3. In Burkholderia multivorans (strain ATCC 17616 / 249), this protein is Argininosuccinate synthase (argG).